The sequence spans 42 residues: MALILQIFPFANAEIVTAAVTCIFMTLFGLSLGFALLKVQGE.

The chain crosses the membrane as a helical span at residues 19 to 37 (AVTCIFMTLFGLSLGFALL).

Belongs to the PetM family. As to quaternary structure, the 4 large subunits of the cytochrome b6-f complex are cytochrome b6, subunit IV (17 kDa polypeptide, PetD), cytochrome f and the Rieske protein, while the 4 small subunits are PetG, PetL, PetM and PetN. The complex functions as a dimer.

It is found in the plastid. The protein resides in the chloroplast thylakoid membrane. Component of the cytochrome b6-f complex, which mediates electron transfer between photosystem II (PSII) and photosystem I (PSI), cyclic electron flow around PSI, and state transitions. This Thalassiosira pseudonana (Marine diatom) protein is Cytochrome b6-f complex subunit 7.